Here is a 593-residue protein sequence, read N- to C-terminus: UvrABC system protein C (593 aa).

The GIY-YIG domain maps to 14–91; that stretch reads DSPGCYLHKD…IQENMPKYNI (78 aa). Residues 196 to 231 enclose the UVR domain; that stretch reads NKIVNGLTEKMKSAAMTMEFERAAEYRDLIEAISLL.

Belongs to the UvrC family. In terms of assembly, interacts with UvrB in an incision complex.

It localises to the cytoplasm. In terms of biological role, the UvrABC repair system catalyzes the recognition and processing of DNA lesions. UvrC both incises the 5' and 3' sides of the lesion. The N-terminal half is responsible for the 3' incision and the C-terminal half is responsible for the 5' incision. The sequence is that of UvrABC system protein C from Streptococcus agalactiae serotype V (strain ATCC BAA-611 / 2603 V/R).